The primary structure comprises 526 residues: Vitamin B6 transporter bsu1 (526 aa).

The segment at M1–E53 is disordered. Basic and acidic residues predominate over residues G38 to E53. Helical transmembrane passes span W81–F101, V118–G138, K147–P167, M173–A192, A204–M224, W238–I257, L314–I330, Y349–Q366, F387–T407, P413–W432, P444–G461, and W480–F501.

It belongs to the major facilitator superfamily. CAR1 family.

It localises to the membrane. Thiamine-regulated, high affinity import carrier of pyridoxine, pyridoxal and pyridoxamine. Also imports, but does not export, amiloride and so confers sensitivity. The sequence is that of Vitamin B6 transporter bsu1 (bsu1) from Schizosaccharomyces pombe (strain 972 / ATCC 24843) (Fission yeast).